Here is a 207-residue protein sequence, read N- to C-terminus: 2,3-bisphosphoglycerate-dependent phosphoglycerate mutase (207 aa).

Substrate is bound by residues R10–N17, T23–G24, R62, E89–Y92, K100, R116–R117, and G160–N161. Catalysis depends on H11, which acts as the Tele-phosphohistidine intermediate. Catalysis depends on E89, which acts as the Proton donor/acceptor.

This sequence belongs to the phosphoglycerate mutase family. BPG-dependent PGAM subfamily. In terms of assembly, homodimer.

It carries out the reaction (2R)-2-phosphoglycerate = (2R)-3-phosphoglycerate. Its pathway is carbohydrate degradation; glycolysis; pyruvate from D-glyceraldehyde 3-phosphate: step 3/5. Catalyzes the interconversion of 2-phosphoglycerate and 3-phosphoglycerate. This chain is 2,3-bisphosphoglycerate-dependent phosphoglycerate mutase, found in Nitrobacter winogradskyi (strain ATCC 25391 / DSM 10237 / CIP 104748 / NCIMB 11846 / Nb-255).